Reading from the N-terminus, the 90-residue chain is UPF0367 protein P9301_01411 (90 aa).

It belongs to the UPF0367 family.

The chain is UPF0367 protein P9301_01411 from Prochlorococcus marinus (strain MIT 9301).